A 199-amino-acid polypeptide reads, in one-letter code: Acireductone dioxygenase 2 (199 aa).

Residues His98, His100, Glu104, and His143 each contribute to the Fe(2+) site. Ni(2+) contacts are provided by His98, His100, Glu104, and His143.

Belongs to the acireductone dioxygenase (ARD) family. The cofactor is Fe(2+). Requires Ni(2+) as cofactor.

It is found in the cytoplasm. The protein localises to the nucleus. It catalyses the reaction 1,2-dihydroxy-5-(methylsulfanyl)pent-1-en-3-one + O2 = 4-methylsulfanyl-2-oxobutanoate + formate + 2 H(+). The catalysed reaction is 1,2-dihydroxy-5-(methylsulfanyl)pent-1-en-3-one + O2 = 3-(methylsulfanyl)propanoate + CO + formate + 2 H(+). It participates in amino-acid biosynthesis; L-methionine biosynthesis via salvage pathway; L-methionine from S-methyl-5-thio-alpha-D-ribose 1-phosphate: step 5/6. Its function is as follows. Catalyzes 2 different reactions between oxygen and the acireductone 1,2-dihydroxy-3-keto-5-methylthiopentene (DHK-MTPene) depending upon the metal bound in the active site. Fe-containing acireductone dioxygenase (Fe-ARD) produces formate and 2-keto-4-methylthiobutyrate (KMTB), the alpha-ketoacid precursor of methionine in the methionine recycle pathway. Ni-containing acireductone dioxygenase (Ni-ARD) produces methylthiopropionate, carbon monoxide and formate, and does not lie on the methionine recycle pathway. In Vitis vinifera (Grape), this protein is Acireductone dioxygenase 2.